We begin with the raw amino-acid sequence, 128 residues long: Putative transmembrane protein 244 (128 aa).

A run of 3 helical transmembrane segments spans residues Phe-17–Val-37, Val-65–Val-85, and Ala-93–Leu-113.

The protein localises to the membrane. This is Putative transmembrane protein 244 (TMEM244) from Homo sapiens (Human).